Here is a 486-residue protein sequence, read N- to C-terminus: Probable glycine dehydrogenase (decarboxylating) subunit 2 (486 aa).

An N6-(pyridoxal phosphate)lysine modification is found at K273.

The protein belongs to the GcvP family. C-terminal subunit subfamily. As to quaternary structure, the glycine cleavage system is composed of four proteins: P, T, L and H. In this organism, the P 'protein' is a heterodimer of two subunits. Pyridoxal 5'-phosphate serves as cofactor.

The enzyme catalyses N(6)-[(R)-lipoyl]-L-lysyl-[glycine-cleavage complex H protein] + glycine + H(+) = N(6)-[(R)-S(8)-aminomethyldihydrolipoyl]-L-lysyl-[glycine-cleavage complex H protein] + CO2. Its function is as follows. The glycine cleavage system catalyzes the degradation of glycine. The P protein binds the alpha-amino group of glycine through its pyridoxal phosphate cofactor; CO(2) is released and the remaining methylamine moiety is then transferred to the lipoamide cofactor of the H protein. The chain is Probable glycine dehydrogenase (decarboxylating) subunit 2 from Alkaliphilus oremlandii (strain OhILAs) (Clostridium oremlandii (strain OhILAs)).